The chain runs to 146 residues: Large ribosomal subunit protein uL15 (146 aa).

The disordered stretch occupies residues 1-51 (MKLHELKPAKGSRKVRNRVGRGTSSGNGKTSGRGQKGQKARSGGGVRLGFE). Over residues 10 to 19 (KGSRKVRNRV) the composition is skewed to basic residues. Gly residues-rich tracts occupy residues 23-35 (TSSGNGKTSGRGQ) and 42-51 (SGGGVRLGFE).

The protein belongs to the universal ribosomal protein uL15 family. In terms of assembly, part of the 50S ribosomal subunit.

Its function is as follows. Binds to the 23S rRNA. This is Large ribosomal subunit protein uL15 from Streptococcus equi subsp. equi (strain 4047).